We begin with the raw amino-acid sequence, 96 residues long: Small ribosomal subunit protein bS6 (96 aa).

Belongs to the bacterial ribosomal protein bS6 family.

In terms of biological role, binds together with bS18 to 16S ribosomal RNA. This Bacillus cereus (strain ATCC 10987 / NRS 248) protein is Small ribosomal subunit protein bS6.